A 38-amino-acid chain; its full sequence is VAKCTEESGGKYFVFCCYKPTRICYMNEQKCESTCIGK.

Disulfide bonds. Expressed in flowers but not in leaves, seeds or roots (at protein level).

In terms of biological role, antimicrobial peptide. Active against fungal species B.cinerea (IC(50)=5.8 uM) and A.niger (IC(50)=5.6 uM) but not against F.oxysporum, F.graminearum, B.sorokinina and P.debaryanum at concentrations below 10 uM. Active against bacterial species P.syringae, B.subtilis and X.campestris. The polypeptide is Antimicrobial peptide 1 (Taraxacum officinale (Common dandelion)).